Here is a 453-residue protein sequence, read N- to C-terminus: Serine--tRNA ligase (453 aa).

Residue 249–251 (TSE) participates in L-serine binding. Residues 280–282 (RKE) and Val-296 contribute to the ATP site. Glu-303 provides a ligand contact to L-serine. Position 367 to 370 (367 to 370 (EMVS)) interacts with ATP. L-serine is bound at residue Thr-404.

The protein belongs to the class-II aminoacyl-tRNA synthetase family. Type-1 seryl-tRNA synthetase subfamily. As to quaternary structure, homodimer. The tRNA molecule binds across the dimer.

It localises to the cytoplasm. It catalyses the reaction tRNA(Ser) + L-serine + ATP = L-seryl-tRNA(Ser) + AMP + diphosphate + H(+). The catalysed reaction is tRNA(Sec) + L-serine + ATP = L-seryl-tRNA(Sec) + AMP + diphosphate + H(+). It functions in the pathway aminoacyl-tRNA biosynthesis; selenocysteinyl-tRNA(Sec) biosynthesis; L-seryl-tRNA(Sec) from L-serine and tRNA(Sec): step 1/1. In terms of biological role, catalyzes the attachment of serine to tRNA(Ser). Is also able to aminoacylate tRNA(Sec) with serine, to form the misacylated tRNA L-seryl-tRNA(Sec), which will be further converted into selenocysteinyl-tRNA(Sec). The chain is Serine--tRNA ligase from Archaeoglobus fulgidus (strain ATCC 49558 / DSM 4304 / JCM 9628 / NBRC 100126 / VC-16).